A 340-amino-acid chain; its full sequence is Ketol-acid reductoisomerase (NADP(+)) (340 aa).

In terms of domain architecture, KARI N-terminal Rossmann spans 3–182 (VQMEYEKDVK…GAARVGLLET (180 aa)). NADP(+)-binding positions include 26–29 (YGSQ), Arg49, Ser53, and 83–86 (DEIQ). Residue His108 is part of the active site. Residue Gly134 coordinates NADP(+). The KARI C-terminal knotted domain occupies 183 to 328 (TYKEETEEDL…AELRKAMPFV (146 aa)). 4 residues coordinate Mg(2+): Asp191, Glu195, Glu227, and Glu231. Ser252 is a binding site for substrate.

This sequence belongs to the ketol-acid reductoisomerase family. It depends on Mg(2+) as a cofactor.

The catalysed reaction is (2R)-2,3-dihydroxy-3-methylbutanoate + NADP(+) = (2S)-2-acetolactate + NADPH + H(+). The enzyme catalyses (2R,3R)-2,3-dihydroxy-3-methylpentanoate + NADP(+) = (S)-2-ethyl-2-hydroxy-3-oxobutanoate + NADPH + H(+). It participates in amino-acid biosynthesis; L-isoleucine biosynthesis; L-isoleucine from 2-oxobutanoate: step 2/4. It functions in the pathway amino-acid biosynthesis; L-valine biosynthesis; L-valine from pyruvate: step 2/4. Involved in the biosynthesis of branched-chain amino acids (BCAA). Catalyzes an alkyl-migration followed by a ketol-acid reduction of (S)-2-acetolactate (S2AL) to yield (R)-2,3-dihydroxy-isovalerate. In the isomerase reaction, S2AL is rearranged via a Mg-dependent methyl migration to produce 3-hydroxy-3-methyl-2-ketobutyrate (HMKB). In the reductase reaction, this 2-ketoacid undergoes a metal-dependent reduction by NADPH to yield (R)-2,3-dihydroxy-isovalerate. In Streptococcus pneumoniae (strain CGSP14), this protein is Ketol-acid reductoisomerase (NADP(+)).